A 458-amino-acid chain; its full sequence is Phosphoglucosamine mutase (458 aa).

Ser-106 serves as the catalytic Phosphoserine intermediate. Residues Ser-106, Asp-247, Asp-249, and Asp-251 each coordinate Mg(2+). Phosphoserine is present on Ser-106.

It belongs to the phosphohexose mutase family. Mg(2+) serves as cofactor. Post-translationally, activated by phosphorylation.

The enzyme catalyses alpha-D-glucosamine 1-phosphate = D-glucosamine 6-phosphate. Its function is as follows. Catalyzes the conversion of glucosamine-6-phosphate to glucosamine-1-phosphate. This is Phosphoglucosamine mutase from Chlamydia trachomatis serovar D (strain ATCC VR-885 / DSM 19411 / UW-3/Cx).